We begin with the raw amino-acid sequence, 203 residues long: UPF0637 protein Sca_0732 (203 aa).

Belongs to the UPF0637 family.

The chain is UPF0637 protein Sca_0732 from Staphylococcus carnosus (strain TM300).